Reading from the N-terminus, the 212-residue chain is Large ribosomal subunit protein uL3 (212 aa).

Gln-153 carries the post-translational modification N5-methylglutamine.

Belongs to the universal ribosomal protein uL3 family. As to quaternary structure, part of the 50S ribosomal subunit. Forms a cluster with proteins L14 and L19. Post-translationally, methylated by PrmB.

Its function is as follows. One of the primary rRNA binding proteins, it binds directly near the 3'-end of the 23S rRNA, where it nucleates assembly of the 50S subunit. The protein is Large ribosomal subunit protein uL3 of Acinetobacter baylyi (strain ATCC 33305 / BD413 / ADP1).